A 127-amino-acid chain; its full sequence is Large ribosomal subunit protein eL24 (127 aa).

The disordered stretch occupies residues 93–127 (KRAQKPEVKQAAAEQAKREIKEKKKAAAKKAAPKK). Over residues 115-127 (KKKAAAKKAAPKK) the composition is skewed to basic residues.

This sequence belongs to the eukaryotic ribosomal protein eL24 family.

This is Large ribosomal subunit protein eL24 (rpl24) from Dictyostelium discoideum (Social amoeba).